We begin with the raw amino-acid sequence, 201 residues long: 3-isopropylmalate dehydratase small subunit (201 aa).

Belongs to the LeuD family. LeuD type 1 subfamily. In terms of assembly, heterodimer of LeuC and LeuD.

The enzyme catalyses (2R,3S)-3-isopropylmalate = (2S)-2-isopropylmalate. Its pathway is amino-acid biosynthesis; L-leucine biosynthesis; L-leucine from 3-methyl-2-oxobutanoate: step 2/4. Functionally, catalyzes the isomerization between 2-isopropylmalate and 3-isopropylmalate, via the formation of 2-isopropylmaleate. The polypeptide is 3-isopropylmalate dehydratase small subunit (Glaesserella parasuis serovar 5 (strain SH0165) (Haemophilus parasuis)).